The following is a 323-amino-acid chain: D-alanine--D-alanine ligase (323 aa).

Residues 121 to 317 (RIWFLTNNIN…FTNLIEEIIK (197 aa)) enclose the ATP-grasp domain. An ATP-binding site is contributed by 147–199 (PMKRPYVIKPLAQGSSIGVEVIFAEDDFNFADYDFPYGDQVIIEQYIKGQGRE). Glutamate 270, glutamate 284, and asparagine 286 together coordinate Mg(2+).

It belongs to the D-alanine--D-alanine ligase family. It depends on Mg(2+) as a cofactor. Requires Mn(2+) as cofactor.

It is found in the cytoplasm. It carries out the reaction 2 D-alanine + ATP = D-alanyl-D-alanine + ADP + phosphate + H(+). Its pathway is cell wall biogenesis; peptidoglycan biosynthesis. Functionally, cell wall formation. This is D-alanine--D-alanine ligase from Rickettsia peacockii (strain Rustic).